Reading from the N-terminus, the 268-residue chain is Microtubule-associated protein RP/EB family member 1 (268 aa).

The residue at position 2 (Ala-2) is an N-acetylalanine. The Calponin-homology (CH) domain occupies Asn-14 to Asp-116. The residue at position 66 (Lys-66) is an N6-crotonyllysine. Phosphotyrosine is present on Tyr-124. An interaction with MTUS2/TIP150 region spans residues Tyr-124 to Tyr-268. The span at Asn-147–Pro-160 shows a compositional bias: low complexity. A disordered region spans residues Asn-147–Pro-184. At Ser-155 the chain carries Phosphoserine. Polar residues predominate over residues Pro-163 to Thr-172. Positions Gly-185–Ile-255 constitute an EB1 C-terminal domain. The segment at Gly-185 to Tyr-268 is interaction with CDK5RAP2. The interaction with APC stretch occupies residues Thr-206 to Glu-211. Positions Glu-208 to Tyr-268 are DCTN1-binding. At Lys-220 the chain carries N6-acetyllysine. The APC-binding stretch occupies residues Lys-220 to Ile-242. An interaction with SKA1 region spans residues Glu-232 to Ile-255.

It belongs to the MAPRE family. As to quaternary structure, homodimer. Heterodimer with MAPRE3. Interacts with DCTN1, DCTN2, TERF1 and dynein intermediate chain. Interaction with DIAPH1 and DIAPH2. Interacts (via C-terminal residues 206-211) with APC (via C-terminal residues 2674-2845); the interaction inhibits association with and bundling of F-actin. Interacts with CLASP2, DST, KIF2C and STIM1; probably required for their targeting to the growing microtubule plus ends. Interacts with MTUS2; interaction is direct and probably targets MTUS2 to microtubules. Interacts (via C-terminus) with SKA1 (via SXIP motif); the interaction is direct and stabilizes the kinetochore-microtubule attachment of the SKA1 complex. Interacts with APC2. Interacts with CLASP1. Interacts with CDK5RAP2. Interacts with MACF1. Interacts with RABL2/RABL2A; binds preferentially to GTP-bound RABL2. Interacts with KCNAB2. Interacts (via C-terminus) with CLIP1. Interacts with SLAIN2 and SLAIN1. Interacts with KIF18B; this interaction is required for efficient accumulation of KIF18B at microtubule plus ends. Interacts with MISP. Interacts with KNSTRN. Interacts with NCKAP5L. Interacts with CAMSAP2. Interacts with PDE4DIP isoform 13/MMG8/SMYLE; this interaction is required for its recruitment to the Golgi apparatus. Forms a pericentrosomal complex with AKAP9, CDK5RAP2 and PDE4DIP isoform 13/MMG8/SMYLE; within this complex, MAPRE1 binding to CDK5RAP2 may be mediated by PDE4DIP. Interacts with AKNA. Interacts with GAS2L1, GAS2L2, and GAS2L3. Post-translationally, acetylation at Lys-220 by KAT2B/PCAF promotes dynamic kinetochore-microtubule interactions in early mitosis. In terms of processing, crotonylated by KAT5 during mitosis, promoting astral microtubule plasticity and dynamic connection between astral microtubules and the cortex during mitotic chromosome segregation, thereby ensuring accurate spindle positioning in mitosis. Decrotonylated by HDAC3.

It is found in the cytoplasm. It localises to the cytoskeleton. The protein localises to the microtubule organizing center. The protein resides in the centrosome. Its subcellular location is the golgi apparatus. It is found in the spindle. It localises to the spindle pole. In terms of biological role, plus-end tracking protein (+TIP) that binds to the plus-end of microtubules and regulates the dynamics of the microtubule cytoskeleton. Recruits other +TIP proteins to microtubules by binding to a conserved Ser-X-Leu-Pro (SXLP) motif in their polypeptide chains. Promotes cytoplasmic microtubule nucleation and elongation. Involved in mitotic spindle positioning by stabilizing microtubules and promoting dynamic connection between astral microtubules and the cortex during mitotic chromosome segregation. Assists chromosome alignment in metaphase by recruiting the SKA complex to the spindle and stabilizing its interactions with microtubule bundles (K-fibers). Also acts as a regulator of minus-end microtubule organization: interacts with the complex formed by AKAP9 and PDE4DIP, leading to recruit CAMSAP2 to the Golgi apparatus, thereby tethering non-centrosomal minus-end microtubules to the Golgi, an important step for polarized cell movement. Promotes elongation of CAMSAP2-decorated microtubule stretches on the minus-end of microtubules. Acts as a regulator of autophagosome transport via interaction with CAMSAP2. Functions downstream of Rho GTPases and DIAPH1 in stable microtubule formation. May play a role in cell migration. This Bos taurus (Bovine) protein is Microtubule-associated protein RP/EB family member 1 (MAPRE1).